Reading from the N-terminus, the 1126-residue chain is Formin-B (1126 aa).

Residues 1–21 are disordered; that stretch reads MFFKGKKKDKEKEKSHGNIGN. Positions 38–406 constitute a GBD/FH3 domain; that stretch reads EQNLSNEDLK…LILKDPSKES (369 aa). Residues 427–447 show a composition bias toward low complexity; the sequence is LNNSNNNNNNNNSNNNNNDSN. The tract at residues 427–462 is disordered; sequence LNNSNNNNNNNNSNNNNNDSNVSTPNINTGSPLLPP. Residues 448-462 show a composition bias toward polar residues; sequence VSTPNINTGSPLLPP. Positions 463–514 form a coiled coil; that stretch reads QQYQDLEQKLQLTQNEKNESQNKVKQLESEIKGLNSTLTGLQLKVTKLEADL. The span at 518 to 532 shows a compositional bias: polar residues; sequence SVTTPPSDTNGTTSP. 2 disordered regions span residues 518-619 and 1004-1078; these read SVTT…SVPS and ARKK…QNGT. The region spanning 527–611 is the FH1 domain; sequence NGTTSPPIEA…PGAPAVPNLP (85 aa). Over residues 543–597 the composition is skewed to pro residues; the sequence is GAPPPPPPPPPAPPVSGGGPPPPPPPPPPSSGGGPPPPPPPPSSGGPPPPPPPPG. Low complexity-rich tracts occupy residues 598–607, 1009–1022, and 1032–1064; these read GMKKPGAPAV, AASG…SGSS, and SPIT…QQQQ. The 400-residue stretch at 612 to 1011 folds into the FH2 domain; that stretch reads PKKSSVPSVK…LAARKKAAAS (400 aa). Positions 980 to 1010 form a coiled coil; sequence KFKNEFKRTIESIQKERENVQKLAARKKAAA. One can recognise a DAD domain in the interval 1071-1100; the sequence is DDIPQNGTFMDQLMSKMKGGEAIRASRRAS.

The protein belongs to the formin homology family. Diaphanous subfamily. As to quaternary structure, interacts (via GBD/FH3 domain) with activated Rho-GTPases. Interacts with pfyA and pfyB.

Formins play an important role in the nucleation of actin and the formation of linear actin filaments. This Dictyostelium discoideum (Social amoeba) protein is Formin-B (forB).